A 380-amino-acid polypeptide reads, in one-letter code: cAMP-dependent protein kinase type I-alpha regulatory subunit (380 aa).

An N-acetylmethionine modification is found at Met-1. Ala-2 is subject to N-acetylalanine; in cAMP-dependent protein kinase type I-alpha regulatory subunit, N-terminally processed. The segment at 2 to 135 is dimerization and phosphorylation; it reads ASGTTASEEE…ALAKAIEKNV (134 aa). Ser-3, Ser-76, and Ser-82 each carry phosphoserine. Positions 64–96 are disordered; it reads IQNLQKAGSRADSREDEISPPPPNPVVKGRRRR. Residues 95 to 99 carry the Pseudophosphorylation motif motif; sequence RRGAI. Ser-100 carries the post-translational modification Phosphoserine. 3',5'-cyclic AMP contacts are provided by residues 136–253, Glu-201, Arg-210, 254–380, Glu-325, and Arg-334; these read LFSH…SKVS and ILES…SLSV. A Phosphoserine modification is found at Ser-257.

The protein belongs to the cAMP-dependent kinase regulatory chain family. In terms of assembly, the inactive holoenzyme is composed of two regulatory chains and two catalytic chains. Activation by cAMP releases the two active catalytic monomers and the regulatory dimer. Interacts with PRKACA and PRKACB. PRKAR1A also interacts with RFC2; the complex may be involved in cell survival. Interacts with AKAP4. Interacts with RARA; the interaction occurs in the presence of cAMP or FSH and regulates RARA transcriptional activity. Interacts with the phosphorylated form of PJA2. Interacts with CBFA2T3. Interacts with PRKX; regulates this cAMP-dependent protein kinase. Interacts with smAKAP; this interaction may target PRKAR1A to the plasma membrane. Interacts with AICDA. The pseudophosphorylation site binds to the substrate-binding region of the catalytic chain, resulting in the inhibition of its activity. The physiological significance of the in vitro phosphorylation of a proximal serine is unclear. In terms of tissue distribution, four types of regulatory chains are found: I-alpha, I-beta, II-alpha, and II-beta. Their expression varies among tissues and is in some cases constitutive and in others inducible.

It is found in the cell membrane. Functionally, regulatory subunit of the cAMP-dependent protein kinases involved in cAMP signaling in cells. The protein is cAMP-dependent protein kinase type I-alpha regulatory subunit (PRKAR1A) of Bos taurus (Bovine).